Consider the following 220-residue polypeptide: Deoxyribose-phosphate aldolase (220 aa).

D89 (proton donor/acceptor) is an active-site residue. K151 (schiff-base intermediate with acetaldehyde) is an active-site residue. K180 functions as the Proton donor/acceptor in the catalytic mechanism.

It belongs to the DeoC/FbaB aldolase family. DeoC type 1 subfamily.

It localises to the cytoplasm. It carries out the reaction 2-deoxy-D-ribose 5-phosphate = D-glyceraldehyde 3-phosphate + acetaldehyde. The protein operates within carbohydrate degradation; 2-deoxy-D-ribose 1-phosphate degradation; D-glyceraldehyde 3-phosphate and acetaldehyde from 2-deoxy-alpha-D-ribose 1-phosphate: step 2/2. In terms of biological role, catalyzes a reversible aldol reaction between acetaldehyde and D-glyceraldehyde 3-phosphate to generate 2-deoxy-D-ribose 5-phosphate. In Streptococcus suis (strain 05ZYH33), this protein is Deoxyribose-phosphate aldolase.